A 584-amino-acid polypeptide reads, in one-letter code: UBX domain-containing protein 2 (584 aa).

At 1-80 (MPVVNHEDSE…PTQTSTPMAE (80 aa)) the chain is on the cytoplasmic side. A helical membrane pass occupies residues 81–101 (TLVPPALGPRPLLFTASLPVV). The Lumenal portion of the chain corresponds to 102–151 (RPLPANFRNDFRTIGLNGRSNTVWSMFESFSYDGNPFLFILLLIPRIINR). Residues 152 to 172 (LSATIFTFFCTLLSLHSISGG) traverse the membrane as a helical segment. Topologically, residues 173–584 (GNSGKPKISK…DEEDEENEEQ (412 aa)) are cytoplasmic. The region spanning 426–570 (ETTGKQATLQ…WPNGSLLVEA (145 aa)) is the UBX domain.

As to quaternary structure, component of the DOA10 ubiquitin ligase complex which contains E3 ligase SSM4/DOA10 and CDC48-binding protein UBX2/SEL1. Component of the HRD1 ubiquitin ligase complex which contains the E3 ligase HRD1, its cofactors HRD3, USA1 and DER1, substrate recruiting factor YOS9 and UBX2. In ERAD-L, HRD3 and YOS9 jointly bind misfolded glycoproteins in the endoplasmic reticulum (ER) lumen. Movement of ERAD-L substrates through the ER membrane is facilitated by HRD1 and DER1 which have lateral gates facing each other and which distort the membrane region between the lateral gates, making it much thinner than a normal phospholipid bilayer. Substrates insert into the membrane as a hairpin loop with one strand interacting with DER1 and the other with HRD1. Both the DOA10 and HRD1 ubiquitin ligase complexes interact with the heterotrimeric CDC48-NPL4-UFD1 ATPase complex which is recruited by UBX2 via its interaction with CDC48 and which moves ubiquitinated substrates to the cytosol for targeting to the proteasome.

The protein resides in the endoplasmic reticulum membrane. Functionally, integral endoplasmic reticulum membrane protein that coordinates the assembly of the ER-associated protein degradation (ERAD) machinery at the ER membrane. Mediates binding of CDC48 to the E3 ubiquitin ligases SSM4/DOA10 and HRD1, and to ERAD substrates. Component of the DOA10 ubiquitin ligase complex, which is part of the ERAD-C pathway responsible for the rapid degradation of membrane proteins with misfolded cytoplasmic domains. ERAD-C substrates are ubiquitinated through DOA10 in conjunction with the E2 ubiquitin-conjugating enzymes UBC6 and UBC7-CUE1. Also a component of the HRD1 ubiquitin ligase complex, which is part of the ERAD-L and ERAD-M pathways responsible for the rapid degradation of soluble lumenal and membrane proteins with misfolded lumenal domains (ERAD-L), or ER-membrane proteins with misfolded transmembrane domains (ERAD-M). ERAD-L substrates are ubiquitinated through HRD1 in conjunction with the E2 ubiquitin-conjugating enzymes UBC1 and UBC7-CUE1. Ubiquitinated substrates are then removed to the cytosol via the action of the CDC48-NPL4-UFD1 ATPase complex and targeted to the proteasome. This Saccharomyces cerevisiae (strain ATCC 204508 / S288c) (Baker's yeast) protein is UBX domain-containing protein 2 (UBX2).